The primary structure comprises 706 residues: Polyribonucleotide nucleotidyltransferase (706 aa).

Asp490 and Asp496 together coordinate Mg(2+). Positions 556 to 615 constitute a KH domain; that stretch reads PRIETMQIPTDKIREVIGSGGKVIREIVEVSGAKVDINDEGIIKIASPNGDSIQKAYDMI. The 69-residue stretch at 625-693 folds into the S1 motif domain; the sequence is GKIYKGKVVK…DRGKVRLAMK (69 aa).

It belongs to the polyribonucleotide nucleotidyltransferase family. Mg(2+) is required as a cofactor.

It localises to the cytoplasm. The catalysed reaction is RNA(n+1) + phosphate = RNA(n) + a ribonucleoside 5'-diphosphate. In terms of biological role, involved in mRNA degradation. Catalyzes the phosphorolysis of single-stranded polyribonucleotides processively in the 3'- to 5'-direction. The chain is Polyribonucleotide nucleotidyltransferase from Jannaschia sp. (strain CCS1).